Here is a 1085-residue protein sequence, read N- to C-terminus: Carbamoyl phosphate synthase large chain (1085 aa).

The segment at 1-399 (MPKRTDISNI…ALQKALCSLE (399 aa)) is carboxyphosphate synthetic domain. ATP contacts are provided by Arg127, Arg167, Gly174, Glu206, Leu208, Glu213, Gly239, Val240, His241, Gln283, and Glu297. The region spanning 131 to 326 (KEAMLKIGMD…IAKVATMLAV (196 aa)) is the ATP-grasp 1 domain. The Mg(2+) site is built by Gln283, Glu297, and Asn299. Residues Gln283, Glu297, and Asn299 each contribute to the Mn(2+) site. Residues 400 to 552 (NNWLGFESLS…APNPLPPIEN (153 aa)) are oligomerization domain. The interval 553–951 (KQEKKEKKIL…AFFKAQTACF (399 aa)) is carbamoyl phosphate synthetic domain. Residues 678-871 (SLFLKELDIK…LAKVATRVMV (194 aa)) enclose the ATP-grasp 2 domain. Arg714, Lys756, Leu758, Glu763, Gly788, Ile789, His790, Ser791, Gln830, and Glu842 together coordinate ATP. Positions 830, 842, and 844 each coordinate Mg(2+). Mn(2+)-binding residues include Gln830, Glu842, and Asn844. Positions 952–1085 (NPIKNKGLIF…ELLALQDYLK (134 aa)) constitute an MGS-like domain. The allosteric domain stretch occupies residues 952-1085 (NPIKNKGLIF…ELLALQDYLK (134 aa)).

It belongs to the CarB family. As to quaternary structure, composed of two chains; the small (or glutamine) chain promotes the hydrolysis of glutamine to ammonia, which is used by the large (or ammonia) chain to synthesize carbamoyl phosphate. Tetramer of heterodimers (alpha,beta)4. Requires Mg(2+) as cofactor. The cofactor is Mn(2+).

It catalyses the reaction hydrogencarbonate + L-glutamine + 2 ATP + H2O = carbamoyl phosphate + L-glutamate + 2 ADP + phosphate + 2 H(+). It carries out the reaction hydrogencarbonate + NH4(+) + 2 ATP = carbamoyl phosphate + 2 ADP + phosphate + 2 H(+). The protein operates within amino-acid biosynthesis; L-arginine biosynthesis; carbamoyl phosphate from bicarbonate: step 1/1. Its pathway is pyrimidine metabolism; UMP biosynthesis via de novo pathway; (S)-dihydroorotate from bicarbonate: step 1/3. Large subunit of the glutamine-dependent carbamoyl phosphate synthetase (CPSase). CPSase catalyzes the formation of carbamoyl phosphate from the ammonia moiety of glutamine, carbonate, and phosphate donated by ATP, constituting the first step of 2 biosynthetic pathways, one leading to arginine and/or urea and the other to pyrimidine nucleotides. The large subunit (synthetase) binds the substrates ammonia (free or transferred from glutamine from the small subunit), hydrogencarbonate and ATP and carries out an ATP-coupled ligase reaction, activating hydrogencarbonate by forming carboxy phosphate which reacts with ammonia to form carbamoyl phosphate. In Helicobacter pylori (strain ATCC 700392 / 26695) (Campylobacter pylori), this protein is Carbamoyl phosphate synthase large chain.